Here is a 295-residue protein sequence, read N- to C-terminus: Guided entry of tail-anchored proteins factor CAMLG (295 aa).

2 disordered regions span residues 1 to 73 and 127 to 148; these read MEPM…ILNP and GVEL…RGSH. Over 1–188 the chain is Cytoplasmic; the sequence is MEPMPSATDG…RTTEEFDSFR (188 aa). Residues 15 to 24 show a composition bias toward polar residues; that stretch reads ATPSGLSASQ. At Ser-53 the chain carries Phosphoserine. Positions 127-138 are enriched in basic and acidic residues; sequence GVELRQRNRGDL. A helical transmembrane segment spans residues 189–206; it reads IFRLVGCALLALVVRAFV. The Lumenal portion of the chain corresponds to 207-208; sequence CK. A disulfide bridge links Cys-207 with Cys-283. The chain crosses the membrane as a helical span at residues 209–227; that stretch reads YLSIFAPFLTLQLAYMGLY. Over 228–268 the chain is Cytoplasmic; that stretch reads KYFPKGEKKVKTTVLTAALLLSGIPAEVINRSMDTYSKMGE. The chain crosses the membrane as a helical span at residues 269-287; it reads VFTDLCVYFFTFIFCHEVL. Over 288 to 295 the chain is Lumenal; the sequence is EYWGPEVP.

As to quaternary structure, component of the Golgi to ER traffic (GET) complex, which is composed of GET1/WRB, CAMLG/GET2 and GET3/TRC40. Within the complex, GET1 and CAMLG form a heterotetramer which is stabilized by phosphatidylinositol binding and which binds to the GET3 homodimer. Interacts (via C-terminus) with GET1. Interacts (via N-terminus) with GET3. GET3 shows a higher affinity for CAMLG than for GET1. Interacts (via N-terminus) with TNFRSF13B/TACI (via C-terminus). As to expression, in the central nervous system, expressed in astrocytes, microglia and neurons (at protein level).

The protein resides in the endoplasmic reticulum membrane. Required for the post-translational delivery of tail-anchored (TA) proteins to the endoplasmic reticulum. Together with GET1/WRB, acts as a membrane receptor for soluble GET3/TRC40, which recognizes and selectively binds the transmembrane domain of TA proteins in the cytosol. Required for the stability of GET1. Stimulates calcium signaling in T cells through its involvement in elevation of intracellular calcium. Essential for the survival of peripheral follicular B cells. The polypeptide is Guided entry of tail-anchored proteins factor CAMLG (Rattus norvegicus (Rat)).